The sequence spans 459 residues: Mitochondrial distribution and morphology protein 34 (459 aa).

The SMP-LTD domain occupies 1 to 190 (MSFRFNEAVF…LPSLIFNTSQ (190 aa)). Positions 338–347 (RSNSNDDNAK) are enriched in basic and acidic residues. A disordered region spans residues 338–375 (RSNSNDDNAKPRRRKIKCKKTRTPSNLQSQGEQAVDDS). The span at 348-359 (PRRRKIKCKKTR) shows a compositional bias: basic residues.

The protein belongs to the MDM34 family. Component of the ER-mitochondria encounter structure (ERMES) or MDM complex, composed of MMM1, MDM10, MDM12 and MDM34. In terms of processing, ubiquitinated by a SCF (SKP1-CUL1-F-box protein) E3 ubiquitin-protein ligase complex containing the F-box protein MDM30. Ubiquitination is important for mitochondrial integrity.

Its subcellular location is the mitochondrion outer membrane. Its function is as follows. Component of the ERMES/MDM complex, which serves as a molecular tether to connect the endoplasmic reticulum (ER) and mitochondria. Components of this complex are involved in the control of mitochondrial shape and protein biogenesis, and function in nonvesicular lipid trafficking between the ER and mitochondria. MDM34 is required for the interaction of the ER-resident membrane protein MMM1 and the outer mitochondrial membrane-resident beta-barrel protein MDM10. In Saccharomyces cerevisiae (strain YJM789) (Baker's yeast), this protein is Mitochondrial distribution and morphology protein 34.